We begin with the raw amino-acid sequence, 202 residues long: 3-isopropylmalate dehydratase small subunit 1 (202 aa).

It belongs to the LeuD family. LeuD type 1 subfamily. Heterodimer of LeuC and LeuD.

The catalysed reaction is (2R,3S)-3-isopropylmalate = (2S)-2-isopropylmalate. Its pathway is amino-acid biosynthesis; L-leucine biosynthesis; L-leucine from 3-methyl-2-oxobutanoate: step 2/4. Functionally, catalyzes the isomerization between 2-isopropylmalate and 3-isopropylmalate, via the formation of 2-isopropylmaleate. The sequence is that of 3-isopropylmalate dehydratase small subunit 1 from Bordetella pertussis (strain Tohama I / ATCC BAA-589 / NCTC 13251).